We begin with the raw amino-acid sequence, 548 residues long: Membrane-associated tyrosine- and threonine-specific cdc2-inhibitory kinase (548 aa).

Positions 61-89 (PNKQRSWSQPRPQSVSFRSPQNKTPASKL) are disordered. The segment covering 63 to 85 (KQRSWSQPRPQSVSFRSPQNKTP) has biased composition (polar residues). Residues 103 to 353 (FKSICKLGRG…VDWLLSLPAI (251 aa)) form the Protein kinase domain. Residues 109 to 117 (LGRGSFGEV) and lysine 132 contribute to the ATP site. Aspartate 226 (proton acceptor) is an active-site residue. The Mg(2+) site is built by asparagine 231, aspartate 244, and glycine 246. Positions 376–392 (VYQFIVWLLSFVFQWLN) match the Membrane-association motif motif. Positions 464–523 (SPDLLSRPSLGSTSTPRNLSPEFSMRKRSALPLTPNVSRISQDSTGKSRSPSTSHSSSGF) are disordered. Over residues 472 to 481 (SLGSTSTPRN) the composition is skewed to polar residues. Residue threonine 478 is modified to Phosphothreonine; by CDK1. Residues 507-521 (STGKSRSPSTSHSSS) show a composition bias toward low complexity.

Belongs to the protein kinase superfamily. Ser/Thr protein kinase family. WEE1 subfamily. As to quaternary structure, interacts with CDC2-CCNB1 complex. Interacts with Mos during oocyte maturation. In terms of processing, autophosphorylated. Phosphorylated on undefined residues by RSK2 and Mos kinases. Phosphorylation at Thr-478 by cdk1 creates a docking site for plk1/plx1, leading to subsequent phosphorylation by plk1/plk1 and inhibition of the protein kinase activity kinase activity.

It localises to the endoplasmic reticulum membrane. The protein localises to the golgi apparatus membrane. It catalyses the reaction L-seryl-[protein] + ATP = O-phospho-L-seryl-[protein] + ADP + H(+). The enzyme catalyses L-threonyl-[protein] + ATP = O-phospho-L-threonyl-[protein] + ADP + H(+). With respect to regulation, negatively regulated by hyperphosphorylation during mitosis. The plk1/plk1 protein kinase may be required for mitotic phosphorylation. Inactivated during oocyte maturation by phosphorylation by RSK2 and Mos kinase. Acts as a negative regulator of entry into mitosis (G2 to M transition) by phosphorylation of the CDK1 kinase specifically when CDK1 is complexed to cyclins. Mediates phosphorylation of CDK1 predominantly on 'Thr-14'. Also involved in Golgi fragmentation. May be involved in phosphorylation of CDK1 on 'Tyr-15' to a lesser degree, however tyrosine kinase activity is unclear and may be indirect. The sequence is that of Membrane-associated tyrosine- and threonine-specific cdc2-inhibitory kinase (pkmyt1) from Xenopus laevis (African clawed frog).